A 433-amino-acid chain; its full sequence is Ascus wall endo-1,3-alpha-glucanase (433 aa).

Belongs to the glycosyl hydrolase 71 family.

The protein resides in the ascus epiplasm. The catalysed reaction is Endohydrolysis of (1-&gt;3)-alpha-D-glucosidic linkages in isolichenin, pseudonigeran and nigeran.. Functionally, promotes the release of ascospores from asci by hydrolyzing 1,3-alpha-glucan in the ascus wall. This chain is Ascus wall endo-1,3-alpha-glucanase, found in Schizosaccharomyces pombe (strain 972 / ATCC 24843) (Fission yeast).